A 130-amino-acid polypeptide reads, in one-letter code: Small ribosomal subunit protein uS9 (130 aa).

The interval 111-130 is disordered; that stretch reads KERRKYGLKKARKAPQFSKR.

This sequence belongs to the universal ribosomal protein uS9 family.

The sequence is that of Small ribosomal subunit protein uS9 from Thermoanaerobacter sp. (strain X514).